Consider the following 203-residue polypeptide: Orotate phosphoribosyltransferase (203 aa).

Residues arginine 94, lysine 98, histidine 100, and 120–128 (EDLISTGGS) each bind 5-phospho-alpha-D-ribose 1-diphosphate. An orotate-binding site is contributed by serine 124.

It belongs to the purine/pyrimidine phosphoribosyltransferase family. PyrE subfamily. In terms of assembly, homodimer. Requires Mg(2+) as cofactor.

It catalyses the reaction orotidine 5'-phosphate + diphosphate = orotate + 5-phospho-alpha-D-ribose 1-diphosphate. It functions in the pathway pyrimidine metabolism; UMP biosynthesis via de novo pathway; UMP from orotate: step 1/2. Catalyzes the transfer of a ribosyl phosphate group from 5-phosphoribose 1-diphosphate to orotate, leading to the formation of orotidine monophosphate (OMP). The protein is Orotate phosphoribosyltransferase of Staphylococcus aureus (strain MSSA476).